Consider the following 415-residue polypeptide: Gamma-glutamyl phosphate reductase (415 aa).

Belongs to the gamma-glutamyl phosphate reductase family.

It is found in the cytoplasm. It catalyses the reaction L-glutamate 5-semialdehyde + phosphate + NADP(+) = L-glutamyl 5-phosphate + NADPH + H(+). Its pathway is amino-acid biosynthesis; L-proline biosynthesis; L-glutamate 5-semialdehyde from L-glutamate: step 2/2. Functionally, catalyzes the NADPH-dependent reduction of L-glutamate 5-phosphate into L-glutamate 5-semialdehyde and phosphate. The product spontaneously undergoes cyclization to form 1-pyrroline-5-carboxylate. The polypeptide is Gamma-glutamyl phosphate reductase (Desulforamulus reducens (strain ATCC BAA-1160 / DSM 100696 / MI-1) (Desulfotomaculum reducens)).